The following is a 343-amino-acid chain: Dipeptide transport system permease protein DppC (343 aa).

The next 5 membrane-spanning stretches (helical) occupy residues 44 to 64, 144 to 164, 195 to 215, 259 to 279, and 309 to 329; these read LVAMWIIAITLVFSVISAFVV, LIIALAAALIDLVIGVTYGII, LALLLGQGISSIIIAIGLFAW, GVIVVQIMFDIPSMIMYEAVL, and FQLIIPAIVLSVLSLTFIFFG. Residues 140 to 329 form the ABC transmembrane type-1 domain; that stretch reads LRISLIIALA…VLSLTFIFFG (190 aa).

It belongs to the binding-protein-dependent transport system permease family. OppBC subfamily. The complex is composed of two ATP-binding proteins (DppD and DppF), two transmembrane proteins (DppB and DppC) and a solute-binding protein (DppA).

Its subcellular location is the cell membrane. Its function is as follows. Part of the ABC transporter DppABCDF involved in dipeptide transport. Responsible for the translocation of the substrate across the membrane. This chain is Dipeptide transport system permease protein DppC, found in Lactococcus lactis subsp. cremoris (strain MG1363).